The sequence spans 1146 residues: Large proline-rich protein BAG6 (1146 aa).

N-acetylmethionine is present on Met-1. The 76-residue stretch at 17 to 92 (LEVLVKTLDS…HLVERAPPQT (76 aa)) folds into the Ubiquitin-like domain. Disordered regions lie at residues 87-128 (RAPP…HDRN), 186-268 (RGGT…HPSP), 381-436 (TMTG…TSHP), 457-525 (QDSG…QGAG), and 555-618 (PGMA…SAAD). Ser-96 carries the phosphoserine modification. A compositionally biased stretch (low complexity) spans 96–108 (SGASSGTGSASAT). A compositionally biased stretch (gly residues) spans 109–122 (HGGGPLPGTRGPGA). A Phosphothreonine modification is found at Thr-117. Positions 208–217 (VALNSQTSEP) are enriched in polar residues. A run of 2 repeats spans residues 236–265 (RPPTQTPELPPSGPAPAGPAPAPETNAPNH) and 410–438 (PSSATVDSSTEGAPPPGPAPPPATSHPRV). The tract at residues 236 to 650 (RPPTQTPELP…LASPTITVAV (415 aa)) is 4 X 29 AA approximate repeats. A compositionally biased stretch (pro residues) spans 239-257 (TQTPELPPSGPAPAGPAPA). Low complexity predominate over residues 394 to 413 (GAEAASPGSGQASSLPPSSA). Pro residues-rich tracts occupy residues 422-433 (APPPGPAPPPAT) and 502-515 (PTPPQARPSHPGGP). 2 stretches are compositionally biased toward low complexity: residues 555–573 (PGMAPASASAPATAQAQAP) and 583–601 (PATASASAGTTNTATTAGP). 2 tandem repeats follow at residues 589 to 616 (SAGTTNTATTAGPAPGGPAQPPPPQPSA) and 622 to 650 (SQLLGNLLGPAGPGAGGPSLASPTITVAV). The span at 603 to 614 (PGGPAQPPPPQP) shows a compositional bias: pro residues. 2 disordered regions span residues 666–711 (ASQA…ESLP) and 961–1146 (PQAL…ADDP). Residues 670–694 (APPPPPPPPPPPPAPEQQTTPPPGS) show a composition bias toward pro residues. Over residues 977-986 (TSPEPQREDA) the composition is skewed to basic and acidic residues. Phosphoserine occurs at positions 978 and 987. The span at 1021-1034 (AEPWAAAVPPEWVP) shows a compositional bias: low complexity. The segment at 1024–1054 (WAAAVPPEWVPIIQQDIQSQRKVKPQPPLSD) is required for interaction with GET4. The Nuclear localization site signature appears at 1026 to 1068 (AAVPPEWVPIIQQDIQSQRKVKPQPPLSDAYLSGMPAKRRKTM). Residues 1036–1146 (IQQDIQSQRK…NAHRAFADDP (111 aa)) form a sufficient for the delivery of client proteins to the endoplasmic reticulum region. Thr-1067 bears the Phosphothreonine mark. The BAG-similar domain, required and sufficient for interaction with UBL4A stretch occupies residues 1072 to 1129 (GPQLLLSEAVSRAAKAAGARPLTSPESLSRDLEAPEVQESYRQQLRSDIQKRLQEDPN). Over residues 1080–1090 (AVSRAAKAAGA) the composition is skewed to low complexity. Ser-1095 and Ser-1131 each carry phosphoserine.

As to quaternary structure, component of the BAG6/BAT3 complex, also named BAT3 complex, at least composed of BAG6, UBL4A and GET4/TRC35. Interacts with GET4; the interaction is direct and localizes BAG6 in the cytosol. Interacts with UBL4A; the interaction is direct and required for UBL4A protein stability. Interacts with AIFM1. Interacts with HSPA2. Interacts with CTCFL. Interacts with p300/EP300. Interacts (via ubiquitin-like domain) with RNF126; required for BAG6-dependent ubiquitination of proteins mislocalized to the cytosol. Interacts (via ubiquitin-like domain) with SGTA; SGTA competes with RNF126 by binding the same region of BAG6, thereby promoting deubiquitination of BAG6-target proteins and rescuing them from degradation. Interacts with ricin A chain. Interacts with VCP and AMFR; both form the VCP/p97-AMFR/gp78 complex. Interacts with SYVN1. Interacts with USP13; the interaction is direct and may mediate UBL4A deubiquitination. Interacts with ZFAND2B. Interacts with KPNA2. Interacts with UBQLN4. In terms of processing, ricin can induce a cleavage by the caspase CASP3. The released C-terminal peptide induces apoptosis.

Its subcellular location is the cytoplasm. It is found in the cytosol. The protein localises to the nucleus. The protein resides in the secreted. It localises to the extracellular exosome. ATP-independent molecular chaperone preventing the aggregation of misfolded and hydrophobic patches-containing proteins. Functions as part of a cytosolic protein quality control complex, the BAG6/BAT3 complex, which maintains these client proteins in a soluble state and participates in their proper delivery to the endoplasmic reticulum or alternatively can promote their sorting to the proteasome where they undergo degradation. The BAG6/BAT3 complex is involved in the post-translational delivery of tail-anchored/type II transmembrane proteins to the endoplasmic reticulum membrane. Recruited to ribosomes, it interacts with the transmembrane region of newly synthesized tail-anchored proteins and together with SGTA and ASNA1 mediates their delivery to the endoplasmic reticulum. Client proteins that cannot be properly delivered to the endoplasmic reticulum are ubiquitinated by RNF126, an E3 ubiquitin-protein ligase associated with BAG6 and are sorted to the proteasome. SGTA which prevents the recruitment of RNF126 to BAG6 may negatively regulate the ubiquitination and the proteasomal degradation of client proteins. Similarly, the BAG6/BAT3 complex also functions as a sorting platform for proteins of the secretory pathway that are mislocalized to the cytosol either delivering them to the proteasome for degradation or to the endoplasmic reticulum. The BAG6/BAT3 complex also plays a role in the endoplasmic reticulum-associated degradation (ERAD), a quality control mechanism that eliminates unwanted proteins of the endoplasmic reticulum through their retrotranslocation to the cytosol and their targeting to the proteasome. It maintains these retrotranslocated proteins in an unfolded yet soluble state condition in the cytosol to ensure their proper delivery to the proteasome. BAG6 is also required for selective ubiquitin-mediated degradation of defective nascent chain polypeptides by the proteasome. In this context, it may participate in the production of antigenic peptides and play a role in antigen presentation in immune response. BAG6 is also involved in endoplasmic reticulum stress-induced pre-emptive quality control, a mechanism that selectively attenuates the translocation of newly synthesized proteins into the endoplasmic reticulum and reroutes them to the cytosol for proteasomal degradation. BAG6 may ensure the proper degradation of these proteins and thereby protects the endoplasmic reticulum from protein overload upon stress. By inhibiting the polyubiquitination and subsequent proteasomal degradation of HSPA2 it may also play a role in the assembly of the synaptonemal complex during spermatogenesis. Also positively regulates apoptosis by interacting with and stabilizing the proapoptotic factor AIFM1. By controlling the steady-state expression of the IGF1R receptor, indirectly regulates the insulin-like growth factor receptor signaling pathway. Functionally, involved in DNA damage-induced apoptosis: following DNA damage, accumulates in the nucleus and forms a complex with p300/EP300, enhancing p300/EP300-mediated p53/TP53 acetylation leading to increase p53/TP53 transcriptional activity. When nuclear, may also act as a component of some chromatin regulator complex that regulates histone 3 'Lys-4' dimethylation (H3K4me2). Its function is as follows. Released extracellularly via exosomes, it is a ligand of the natural killer/NK cells receptor NCR3 and stimulates NK cells cytotoxicity. It may thereby trigger NK cells cytotoxicity against neighboring tumor cells and immature myeloid dendritic cells (DC). In terms of biological role, may mediate ricin-induced apoptosis. This Rattus norvegicus (Rat) protein is Large proline-rich protein BAG6.